We begin with the raw amino-acid sequence, 88 residues long: MATSDVKPKSISRAKKWSEEIENLYRFQQAGYRDEIEYKQVKQVAMVDRWPETGYVKKLQRRDNTFFYYNKERECEDKEVHKVKVYVY.

The protein belongs to the MEIG1 family. As to quaternary structure, interacts with PACRG. Interacts with MORN3. In terms of tissue distribution, expressed in the testes (at protein level). Expressed in the ovary. Several isoforms have been identified differing in their 5'-untranslated exons. These isoforms show different tissue expression. Some are expressed in various tissues, including lung, liver, brain, testis, oviduct and oocytes. Some are testis-specific.

In terms of biological role, essential for spermiogenesis. In Mus musculus (Mouse), this protein is Meiosis-expressed gene 1 protein.